Reading from the N-terminus, the 156-residue chain is S-ribosylhomocysteine lyase (156 aa).

The Fe cation site is built by His56, His60, and Cys123.

The protein belongs to the LuxS family. As to quaternary structure, homodimer. The cofactor is Fe cation.

It carries out the reaction S-(5-deoxy-D-ribos-5-yl)-L-homocysteine = (S)-4,5-dihydroxypentane-2,3-dione + L-homocysteine. Its function is as follows. Involved in the synthesis of autoinducer 2 (AI-2) which is secreted by bacteria and is used to communicate both the cell density and the metabolic potential of the environment. The regulation of gene expression in response to changes in cell density is called quorum sensing. Catalyzes the transformation of S-ribosylhomocysteine (RHC) to homocysteine (HC) and 4,5-dihydroxy-2,3-pentadione (DPD). The chain is S-ribosylhomocysteine lyase from Staphylococcus haemolyticus (strain JCSC1435).